We begin with the raw amino-acid sequence, 946 residues long: Probable leucine-rich repeat receptor-like protein kinase At5g49770 (946 aa).

The N-terminal stretch at 1-25 (MKMSSRIGLFKLLILLFFQIYSVYA) is a signal peptide. Residues 26–561 (FTDGSDFTAL…LEDSKTVSMK (536 aa)) are Extracellular-facing. LRR repeat units lie at residues 67-91 (DNRV…ISTL), 92-116 (SELQ…IGNL), 118-140 (KLTF…IGNL), 141-164 (EQLT…MGRL), 166-191 (KLYW…SLPG), 195-219 (LLQT…LFSS), 221-244 (MTLL…LGLV), 245-268 (QNLT…LNNL), 269-293 (TNLQ…SLTS), 295-314 (YTLD…SWIP), 316-340 (LNSL…LFSP), 342-365 (QLQT…NYSK), 367-387 (LDFV…ANNP), and 389-407 (NVML…QLSG). Asn246, Asn267, and Asn287 each carry an N-linked (GlcNAc...) asparagine glycan. Residues Asn354 and Asn362 are each glycosylated (N-linked (GlcNAc...) asparagine). Asn415, Asn460, Asn489, and Asn514 each carry an N-linked (GlcNAc...) asparagine glycan. A helical transmembrane segment spans residues 562–582 (VIIGVVVGVVVLLLLLALAGI). Residues 583 to 946 (YALRQKKRAQ…YTGVFPTPKP (364 aa)) are Cytoplasmic-facing. In terms of domain architecture, Protein kinase spans 634-908 (FSDANDVGGG…EVVQELESIL (275 aa)). Residues 640-648 (VGGGGYGQV) and Lys662 contribute to the ATP site. Asp758 functions as the Proton acceptor in the catalytic mechanism. The interval 919-946 (SATYEEASGDPYGRDSFEYTGVFPTPKP) is disordered.

The protein belongs to the protein kinase superfamily. Ser/Thr protein kinase family.

It is found in the membrane. It catalyses the reaction L-seryl-[protein] + ATP = O-phospho-L-seryl-[protein] + ADP + H(+). It carries out the reaction L-threonyl-[protein] + ATP = O-phospho-L-threonyl-[protein] + ADP + H(+). The polypeptide is Probable leucine-rich repeat receptor-like protein kinase At5g49770 (Arabidopsis thaliana (Mouse-ear cress)).